The primary structure comprises 251 residues: 3-deoxy-manno-octulosonate cytidylyltransferase (251 aa).

This sequence belongs to the KdsB family.

The protein localises to the cytoplasm. It catalyses the reaction 3-deoxy-alpha-D-manno-oct-2-ulosonate + CTP = CMP-3-deoxy-beta-D-manno-octulosonate + diphosphate. The protein operates within nucleotide-sugar biosynthesis; CMP-3-deoxy-D-manno-octulosonate biosynthesis; CMP-3-deoxy-D-manno-octulosonate from 3-deoxy-D-manno-octulosonate and CTP: step 1/1. Its pathway is bacterial outer membrane biogenesis; lipopolysaccharide biosynthesis. Its function is as follows. Activates KDO (a required 8-carbon sugar) for incorporation into bacterial lipopolysaccharide in Gram-negative bacteria. In Parabacteroides distasonis (strain ATCC 8503 / DSM 20701 / CIP 104284 / JCM 5825 / NCTC 11152), this protein is 3-deoxy-manno-octulosonate cytidylyltransferase.